The following is a 546-amino-acid chain: (-)-5-epieremophilene synthase STPS1 (546 aa).

The Mg(2+) site is built by Asp-299, Asp-303, Asp-442, Thr-446, and Glu-450. Positions 299-303 (DDTYD) match the DDXXD motif motif.

This sequence belongs to the terpene synthase family. Tpsa subfamily. As to quaternary structure, monomer. Mg(2+) serves as cofactor. Highly expressed in leaves and at lower levels in flowers.

The enzyme catalyses (2E,6E)-farnesyl diphosphate = (-)-5-epi-eremophilene + diphosphate. The protein operates within secondary metabolite biosynthesis; terpenoid biosynthesis. Sesquiterpene synthase that catalyzes the conversion of farnesyl diphosphate to (-)-5-epi-eremophilene. The polypeptide is (-)-5-epieremophilene synthase STPS1 (Salvia miltiorrhiza (Chinese sage)).